Here is a 183-residue protein sequence, read N- to C-terminus: Protein Dr1 (183 aa).

Positions 19–82 (TLPRASINKI…INAEHVLEAL (64 aa)) constitute a Histone-fold domain. The tract at residues 92–183 (QEAEAVLHDC…DDDDDDDDDY (92 aa)) is repression of TATA-containing promoters. Positions 155-183 (AMVQRPPLADGSVASKPSEDDDDDDDDDY) are disordered. The span at 173 to 183 (EDDDDDDDDDY) shows a compositional bias: acidic residues.

Belongs to the NC2 beta/DR1 family. As to quaternary structure, component of the Ada2a-containing (ATAC) complex composed of at least Ada2a, Atac1, Hcf, Ada3, Gcn5, Mocs2B, Charac-14, Atac3, Atac2, NC2beta and wds. Homodimer. Interacts with NC2-alpha/Drap1 to form the dNC2 complex.

It is found in the nucleus. Bifunctional basic transcription factor. Activates transcription of DPE (Downstream Promoter Element) containing promoters while repressing transcription of promoters which contain TATA elements. Together with Chrac-14, promotes nucleosome sliding of ATP-dependent nucleosome remodeling complexes. In Drosophila melanogaster (Fruit fly), this protein is Protein Dr1 (NC2beta).